We begin with the raw amino-acid sequence, 335 residues long: Glyceraldehyde-3-phosphate dehydrogenase 2 (335 aa).

NAD(+) contacts are provided by residues 13–14 (TI) and glycine 111. 140-142 (SCN) contacts D-glyceraldehyde 3-phosphate. Cysteine 141 acts as the Nucleophile in catalysis. NAD(+) is bound at residue arginine 169. D-glyceraldehyde 3-phosphate is bound by residues threonine 171 and 195-196 (HG). Residue glutamine 300 participates in NAD(+) binding.

This sequence belongs to the glyceraldehyde-3-phosphate dehydrogenase family. As to quaternary structure, homotetramer.

It is found in the cytoplasm. It catalyses the reaction D-glyceraldehyde 3-phosphate + phosphate + NADP(+) = (2R)-3-phospho-glyceroyl phosphate + NADPH + H(+). It carries out the reaction D-glyceraldehyde 3-phosphate + phosphate + NAD(+) = (2R)-3-phospho-glyceroyl phosphate + NADH + H(+). It functions in the pathway carbohydrate degradation; glycolysis; pyruvate from D-glyceraldehyde 3-phosphate: step 1/5. The protein is Glyceraldehyde-3-phosphate dehydrogenase 2 (gapB) of Methanosarcina acetivorans (strain ATCC 35395 / DSM 2834 / JCM 12185 / C2A).